We begin with the raw amino-acid sequence, 380 residues long: Alcohol dehydrogenase 2 (380 aa).

Zn(2+) contacts are provided by Cys48, Thr50, His70, Cys100, Cys103, Cys106, Cys114, and Cys178. Residues Thr50 and His70 each contribute to the an alcohol site. Position 50 (Thr50) interacts with NAD(+). NAD(+)-binding positions include 203–208, Asp227, Arg232, Thr273, Val296, 296–298, Phe323, and Arg373; these read GLGAVG and VGV.

This sequence belongs to the zinc-containing alcohol dehydrogenase family. As to quaternary structure, homodimer. Homotetramer. Zn(2+) serves as cofactor.

Its subcellular location is the cytoplasm. The enzyme catalyses a primary alcohol + NAD(+) = an aldehyde + NADH + H(+). It catalyses the reaction a secondary alcohol + NAD(+) = a ketone + NADH + H(+). This Solanum lycopersicum (Tomato) protein is Alcohol dehydrogenase 2 (ADH2).